We begin with the raw amino-acid sequence, 140 residues long: Large ribosomal subunit protein uL11 (140 aa).

This sequence belongs to the universal ribosomal protein uL11 family. In terms of assembly, part of the ribosomal stalk of the 50S ribosomal subunit. Interacts with L10 and the large rRNA to form the base of the stalk. L10 forms an elongated spine to which L12 dimers bind in a sequential fashion forming a multimeric L10(L12)X complex. Post-translationally, one or more lysine residues are methylated.

In terms of biological role, forms part of the ribosomal stalk which helps the ribosome interact with GTP-bound translation factors. The sequence is that of Large ribosomal subunit protein uL11 from Geobacter metallireducens (strain ATCC 53774 / DSM 7210 / GS-15).